An 88-amino-acid polypeptide reads, in one-letter code: Large ribosomal subunit protein bL31B (88 aa).

This sequence belongs to the bacterial ribosomal protein bL31 family. Type B subfamily. Part of the 50S ribosomal subunit.

This Glaesserella parasuis serovar 5 (strain SH0165) (Haemophilus parasuis) protein is Large ribosomal subunit protein bL31B.